We begin with the raw amino-acid sequence, 447 residues long: Ribulose bisphosphate carboxylase large chain (447 aa).

N89 and T139 together coordinate substrate. K141 acts as the Proton acceptor in catalysis. Residue K143 participates in substrate binding. Residues K167, D169, and E170 each coordinate Mg(2+). Residue K167 is modified to N6-carboxylysine. The active-site Proton acceptor is the H260. Positions 261, 293, and 345 each coordinate substrate.

The protein belongs to the RuBisCO large chain family. Type I subfamily. In terms of assembly, heterohexadecamer of 8 large chains and 8 small chains; disulfide-linked. The disulfide link is formed within the large subunit homodimers. Requires Mg(2+) as cofactor. The disulfide bond which can form in the large chain dimeric partners within the hexadecamer appears to be associated with oxidative stress and protein turnover.

Its subcellular location is the plastid. It is found in the chloroplast. It catalyses the reaction 2 (2R)-3-phosphoglycerate + 2 H(+) = D-ribulose 1,5-bisphosphate + CO2 + H2O. The enzyme catalyses D-ribulose 1,5-bisphosphate + O2 = 2-phosphoglycolate + (2R)-3-phosphoglycerate + 2 H(+). Its function is as follows. RuBisCO catalyzes two reactions: the carboxylation of D-ribulose 1,5-bisphosphate, the primary event in carbon dioxide fixation, as well as the oxidative fragmentation of the pentose substrate in the photorespiration process. Both reactions occur simultaneously and in competition at the same active site. In Ligustrum vulgare (Common privet), this protein is Ribulose bisphosphate carboxylase large chain.